The primary structure comprises 218 residues: N-(5'-phosphoribosyl)anthranilate isomerase (218 aa).

This sequence belongs to the TrpF family.

The enzyme catalyses N-(5-phospho-beta-D-ribosyl)anthranilate = 1-(2-carboxyphenylamino)-1-deoxy-D-ribulose 5-phosphate. The protein operates within amino-acid biosynthesis; L-tryptophan biosynthesis; L-tryptophan from chorismate: step 3/5. The sequence is that of N-(5'-phosphoribosyl)anthranilate isomerase from Stenotrophomonas maltophilia (strain K279a).